A 305-amino-acid chain; its full sequence is Methionyl-tRNA formyltransferase (305 aa).

Ser-111 to Pro-114 is a binding site for (6S)-5,6,7,8-tetrahydrofolate.

This sequence belongs to the Fmt family.

The enzyme catalyses L-methionyl-tRNA(fMet) + (6R)-10-formyltetrahydrofolate = N-formyl-L-methionyl-tRNA(fMet) + (6S)-5,6,7,8-tetrahydrofolate + H(+). In terms of biological role, attaches a formyl group to the free amino group of methionyl-tRNA(fMet). The formyl group appears to play a dual role in the initiator identity of N-formylmethionyl-tRNA by promoting its recognition by IF2 and preventing the misappropriation of this tRNA by the elongation apparatus. The protein is Methionyl-tRNA formyltransferase of Wolinella succinogenes (strain ATCC 29543 / DSM 1740 / CCUG 13145 / JCM 31913 / LMG 7466 / NCTC 11488 / FDC 602W) (Vibrio succinogenes).